Here is a 364-residue protein sequence, read N- to C-terminus: tRNA/tmRNA (uracil-C(5))-methyltransferase (364 aa).

The S-adenosyl-L-methionine site is built by glutamine 188, tyrosine 216, asparagine 221, glutamate 237, and aspartate 297. The active-site Nucleophile is cysteine 322. The Proton acceptor role is filled by glutamate 356.

This sequence belongs to the class I-like SAM-binding methyltransferase superfamily. RNA M5U methyltransferase family. TrmA subfamily.

It carries out the reaction uridine(54) in tRNA + S-adenosyl-L-methionine = 5-methyluridine(54) in tRNA + S-adenosyl-L-homocysteine + H(+). It catalyses the reaction uridine(341) in tmRNA + S-adenosyl-L-methionine = 5-methyluridine(341) in tmRNA + S-adenosyl-L-homocysteine + H(+). Dual-specificity methyltransferase that catalyzes the formation of 5-methyluridine at position 54 (m5U54) in all tRNAs, and that of position 341 (m5U341) in tmRNA (transfer-mRNA). The protein is tRNA/tmRNA (uracil-C(5))-methyltransferase of Colwellia psychrerythraea (strain 34H / ATCC BAA-681) (Vibrio psychroerythus).